The sequence spans 691 residues: Ubiquitin-like domain-containing protein CIP73 (691 aa).

Residues 22-97 (IEIKIKMLDS…LHLVARHPDL (76 aa)) form the Ubiquitin-like domain. Disordered stretches follow at residues 92-118 (ARHPDLTPPGSLPNHSATEPNSSTGHG), 176-203 (TGLGRTSDFTGNPSRPQPEQAGFRISSD), 264-283 (RNEERGFVSSRLSSTPEGLS), 432-473 (ASTT…ASIA), 499-554 (SVNT…SSRV), 590-624 (EIHVEDPSSQGTTAGVTSAATSSGAAQAPEAEPNV), and 645-691 (HIGR…QKME). Composition is skewed to polar residues over residues 104–118 (PNHSATEPNSSTGHG), 178–189 (LGRTSDFTGNPS), 273–283 (SRLSSTPEGLS), 446–465 (TQSASVQRNTGESSVNQTTS), and 499–523 (SVNTNNEQGSQPASQQHTAPHSTAE). Basic and acidic residues predominate over residues 525–535 (TLHRQSMEDSA). The span at 536–554 (RNGTLPTPNTQQEPSSSRV) shows a compositional bias: polar residues. Positions 597 to 617 (SSQGTTAGVTSAATSSGAAQA) are enriched in low complexity.

In terms of assembly, interacts with CCAMK. In terms of processing, phosphorylated at the N-terminus by CCAMK. As to expression, highly epressed in roots. Expressed at very low levels in leaves and stems.

The protein resides in the nucleus. In terms of biological role, involved in root nodulation. Required for root nodule organogenesis after infection by symbiotic rhizobia. Probably not involved in arbuscular mycorrhizal (AM) symbiosis. Acts downstream of CCAMK. The sequence is that of Ubiquitin-like domain-containing protein CIP73 from Lotus japonicus (Lotus corniculatus var. japonicus).